The sequence spans 353 residues: DNA polymerase IV (353 aa).

The 182-residue stretch at I4 to G185 folds into the UmuC domain. The Mg(2+) site is built by D8 and D103. E104 is an active-site residue.

The protein belongs to the DNA polymerase type-Y family. In terms of assembly, monomer. Mg(2+) serves as cofactor.

Its subcellular location is the cytoplasm. The enzyme catalyses DNA(n) + a 2'-deoxyribonucleoside 5'-triphosphate = DNA(n+1) + diphosphate. In terms of biological role, poorly processive, error-prone DNA polymerase involved in untargeted mutagenesis. Copies undamaged DNA at stalled replication forks, which arise in vivo from mismatched or misaligned primer ends. These misaligned primers can be extended by PolIV. Exhibits no 3'-5' exonuclease (proofreading) activity. May be involved in translesional synthesis, in conjunction with the beta clamp from PolIII. The sequence is that of DNA polymerase IV from Serratia proteamaculans (strain 568).